Reading from the N-terminus, the 251-residue chain is Flap endonuclease Xni (251 aa).

D104 lines the Mg(2+) pocket. Positions 160–249 (VQPQQLPDYW…IDGNLQQLRL (90 aa)) constitute a 5'-3' exonuclease domain. Residues L171, A172, P180, V182, and I185 each contribute to the K(+) site. The interval 184–189 (GIGPKS) is interaction with DNA.

Belongs to the Xni family. Requires Mg(2+) as cofactor. K(+) serves as cofactor.

Functionally, has flap endonuclease activity. During DNA replication, flap endonucleases cleave the 5'-overhanging flap structure that is generated by displacement synthesis when DNA polymerase encounters the 5'-end of a downstream Okazaki fragment. The polypeptide is Flap endonuclease Xni (Shigella flexneri serotype 5b (strain 8401)).